The sequence spans 439 residues: UDP-N-acetylmuramoylalanine--D-glutamate ligase (439 aa).

Position 116-122 (116-122 (GSNGKTT)) interacts with ATP.

This sequence belongs to the MurCDEF family.

The protein localises to the cytoplasm. The enzyme catalyses UDP-N-acetyl-alpha-D-muramoyl-L-alanine + D-glutamate + ATP = UDP-N-acetyl-alpha-D-muramoyl-L-alanyl-D-glutamate + ADP + phosphate + H(+). It participates in cell wall biogenesis; peptidoglycan biosynthesis. In terms of biological role, cell wall formation. Catalyzes the addition of glutamate to the nucleotide precursor UDP-N-acetylmuramoyl-L-alanine (UMA). In Shewanella oneidensis (strain ATCC 700550 / JCM 31522 / CIP 106686 / LMG 19005 / NCIMB 14063 / MR-1), this protein is UDP-N-acetylmuramoylalanine--D-glutamate ligase.